Consider the following 110-residue polypeptide: UPF0060 membrane protein Bpet0062 (110 aa).

Transmembrane regions (helical) follow at residues 7-27, 33-53, 63-83, and 86-106; these read LGLF…PYLW, SAWL…LLTL, AAYG…VDGV, and ATTD…IMAG.

The protein belongs to the UPF0060 family.

It localises to the cell inner membrane. The protein is UPF0060 membrane protein Bpet0062 of Bordetella petrii (strain ATCC BAA-461 / DSM 12804 / CCUG 43448).